Reading from the N-terminus, the 527-residue chain is Rhamnogalacturonate lyase A (527 aa).

The first 19 residues, 1-19 (MLKASLLSFVAFTAQVAHA), serve as a signal peptide directing secretion. Cystine bridges form between Cys-49/Cys-92 and Cys-183/Cys-192. An N-linked (GlcNAc...) asparagine glycan is attached at Asn-350.

The protein belongs to the polysaccharide lyase 4 family.

The protein resides in the secreted. The catalysed reaction is Endotype eliminative cleavage of L-alpha-rhamnopyranosyl-(1-&gt;4)-alpha-D-galactopyranosyluronic acid bonds of rhamnogalacturonan I domains in ramified hairy regions of pectin leaving L-rhamnopyranose at the reducing end and 4-deoxy-4,5-unsaturated D-galactopyranosyluronic acid at the non-reducing end.. In terms of biological role, pectinolytic enzyme that has a positive effect in the apple hot-mash liquefaction process. This endolyase hydrolyzes the alpha-L-rhamnopyranosyl-(1,4)-alpha-D-galacturonopyranosyl glycosidic linkage by beta-elimination, thereby generating oligosaccharides terminating at the non-reducing end with a hex-4-enopyranosyluronic acid residue. The polypeptide is Rhamnogalacturonate lyase A (rglA) (Aspergillus aculeatus).